A 501-amino-acid polypeptide reads, in one-letter code: Rhazimal synthase (501 aa).

Residues 4-24 (MQLSFASAVVYSLIFFVFLLV) form a helical membrane-spanning segment. Asn-282 carries an N-linked (GlcNAc...) asparagine glycan. Residue Cys-442 participates in heme binding.

This sequence belongs to the cytochrome P450 family. It depends on heme as a cofactor.

It localises to the membrane. The enzyme catalyses (19E)-geissoschizine + reduced [NADPH--hemoprotein reductase] + O2 = rhazimal + oxidized [NADPH--hemoprotein reductase] + 2 H2O + H(+). It carries out the reaction (19E)-geissoschizine + reduced [NADPH--hemoprotein reductase] + O2 = akuammicine + formate + oxidized [NADPH--hemoprotein reductase] + H2O + H(+). It functions in the pathway alkaloid biosynthesis. Its function is as follows. A cytochrome P450 monooxygenase involved in the biosynthesis of akuammilan monoterpene indole alkaloids (MIAs) natural products, components with various biological properties such as antidiabetic, antibacterial, anti-inflammatory, anticancer, and antimalarial activities. Catalyzes the conversion of geissoschizine to rhazimal. Can also, with lower efficiency, support the conversion of geissoschizine to akuammicine. In Alstonia scholaris (Dogbane), this protein is Rhazimal synthase.